A 790-amino-acid chain; its full sequence is Kinesin-like protein KIN-14D (790 aa).

Disordered regions lie at residues 1–56 (MPLR…DVGS) and 116–139 (DKENLSSSLQSAEKRYSDKELDAK). Residues 1–66 (MPLRNQNRAP…TEECGKVEFT (66 aa)) are globular. Residues 16 to 33 (VKKEALSSIPFDKRRKET) show a composition bias toward basic and acidic residues. The segment covering 34 to 55 (QGTGRRQVLSTVNRQDANSDVG) has biased composition (polar residues). Coiled coils occupy residues 117 to 316 (KENL…HVVQ) and 347 to 426 (SLEE…LELK). Residues 127–139 (AEKRYSDKELDAK) are compositionally biased toward basic and acidic residues. The Kinesin motor domain occupies 428–769 (NIRVFCRVRP…LRFAARVNAC (342 aa)). Position 513-520 (513-520 (GQTGSGKT)) interacts with ATP.

Belongs to the TRAFAC class myosin-kinesin ATPase superfamily. Kinesin family. KIN-14 subfamily. Slightly expressed in anther lobes with pollen mother cells at anther stage 5. Strongly expressed at anther stage 6 in the tapetum and meiotic cells. Also detected in the gynoecium and the ovule.

The protein localises to the cytoplasm. Its subcellular location is the cytoskeleton. It is found in the phragmoplast. Kinesin that supports microtubule movement in an ATP-dependent manner and that functions as a minus-end directed motor as well as a plus-end tracking protein. During mitosis, is involved in early spindle assembly. Participates in the capture of antiparallel interpolar microtubules and helps in generating force to coalign microtubules. In Arabidopsis thaliana (Mouse-ear cress), this protein is Kinesin-like protein KIN-14D.